A 574-amino-acid chain; its full sequence is Fusion glycoprotein F0 (574 aa).

Positions 1-25 are cleaved as a signal peptide; that stretch reads MELLILKANAITTILTAVTFCFASG. Residues 26 to 524 are Extracellular-facing; sequence QNITEEFYQS…NVNAGKSTTN (499 aa). N-linked (GlcNAc...) asparagine; by host glycans are attached at residues Asn-27 and Asn-70. 7 cysteine pairs are disulfide-bonded: Cys-37-Cys-439, Cys-69-Cys-212, Cys-313-Cys-343, Cys-322-Cys-333, Cys-358-Cys-367, Cys-382-Cys-393, and Cys-416-Cys-422. A coiled-coil region spans residues 76-96; sequence VKLIKQELDKYKNAVTELQLL. Asn-116, Asn-120, and Asn-126 each carry an N-linked (GlcNAc...) asparagine; by host glycan. A fusion peptide region spans residues 137-157; that stretch reads FLGFLLGVGSAIASGVAVSKV. A coiled-coil region spans residues 158 to 209; the sequence is LHLEGEVNKIKSALLSTNKAVVSLSNGVSVLTSKVLDLKNYIDKQLLPIVNK. Residues 481–516 are a coiled coil; the sequence is LVFPSDEFDASISQVNEKINQSLAFIRKSDELLHNV. The N-linked (GlcNAc...) asparagine; by host glycan is linked to Asn-500. A helical membrane pass occupies residues 525–550; that stretch reads IMITTIIIVIIVILLSLIAVGLLLYC. Cys-550 carries the S-palmitoyl cysteine; by host lipid modification. Residues 551–574 are Cytoplasmic-facing; sequence KARSTPVTLSKDQLSGINNIAFSN.

It belongs to the paramyxoviruses fusion glycoprotein family. As to quaternary structure, homotrimer. Heterodimer with fusion protein F2; disulfide-linked. Interacts with host NCL; this interaction plays a role in viral entry into the host cell. As a heterodimer with F2, interacts with host heparan sulfate. As a heterodimer with F2, interacts with host IGF1R; this interaction activates PRKCZ/PKCzeta that recruits NCL/nucleolin from the host nucleus to the plasma membrane. Part of a complex composed of F1, F2 and G glycoproteins. As a heterodimer with F2, interacts with host RHOA; this interaction facilitates virus-induced syncytium formation. Homotrimer. Heterodimer with fusion protein F1; disulfide-linked. As a heterodimer with F1, interacts with host heparan sulfate. As a heterodimer with F1, interacts with host IGF1R; this interaction activates PRKCZ/PKCzeta that recruits NCL/nucleolin from the host nucleus to the plasma membrane. Part of a complex composed of F1, F2 and G glycoproteins. As a heterodimer with F1, interacts with host RHOA; this interaction facilitates virus-induced syncytium formation. In terms of processing, the F glycoprotein is synthesized as a F0 inactive precursor that is heavily N-glycosylated and processed at two sites by a host furin-like protease probably in the Golgi. The cleavage site between p27 and F1 may occur after endocytosis to yield the mature F1 and F2 proteins. Both cleavages are required for membrane fusion and p27 is released from the processed protein.

The protein localises to the host Golgi apparatus membrane. Its subcellular location is the virion membrane. The protein resides in the host cell membrane. Inactive precursor that is cleaved at two sites by a furin-like protease to give rise to the mature F1 and F2 fusion glycoproteins. In terms of biological role, class I viral fusion protein. Under the current model, the protein has at least 3 conformational states: pre-fusion native state, pre-hairpin intermediate state, and post-fusion hairpin state. During viral and plasma cell membrane fusion, the coiled coil regions assume a trimer-of-hairpins structure, positioning the fusion peptide in close proximity to the C-terminal region of the ectodomain. The formation of this structure appears to drive apposition and subsequent fusion of viral and cellular membranes leading to delivery of the nucleocapsid into the cytoplasm. This fusion is pH independent and occurs at the plasma or endosomal membrane. The trimer of F1-F2 (F protein) also facilitates the attachment to host cell by binding to host heparan sulfate. F protein is involved in the entry into the host cell through the interaction with host IGF1R. This interaction activates PRKCZ/PKCzeta that recruits host NCL/nucleolin to the apical cell surface where it can bind fusion glycoprotein F1. Later in infection, F protein expressed at the plasma membrane of infected cells can mediate fusion with adjacent cells to form syncytia, a cytopathic effect that could lead to tissue necrosis. F protein may trigger p53-dependent apoptosis. Its function is as follows. Major determinant of the species specificity of RSV infection. The trimer of F1-F2 (F protein) also facilitates the attachment to host cell by binding to host heparan sulfate. F protein is involved in the entry into the host cell through the interaction with host IGF1R. This interaction activates PRKCZ/PKCzeta that recruits host NCL/nucleolin to the apical cell surface where it can bind fusion glycoprotein F1. Later in infection, F protein expressed at the plasma membrane of infected cells can mediate fusion with adjacent cells to form syncytia, a cytopathic effect that could lead to tissue necrosis. F protein seems to trigger p53-dependent apoptosis. This chain is Fusion glycoprotein F0 (F), found in Human respiratory syncytial virus A (strain A2).